The chain runs to 396 residues: Anhydro-N-acetylmuramic acid kinase (396 aa).

19-26 (GTSADGID) serves as a coordination point for ATP.

This sequence belongs to the anhydro-N-acetylmuramic acid kinase family.

It catalyses the reaction 1,6-anhydro-N-acetyl-beta-muramate + ATP + H2O = N-acetyl-D-muramate 6-phosphate + ADP + H(+). It functions in the pathway amino-sugar metabolism; 1,6-anhydro-N-acetylmuramate degradation. Its pathway is cell wall biogenesis; peptidoglycan recycling. Its function is as follows. Catalyzes the specific phosphorylation of 1,6-anhydro-N-acetylmuramic acid (anhMurNAc) with the simultaneous cleavage of the 1,6-anhydro ring, generating MurNAc-6-P. Is required for the utilization of anhMurNAc either imported from the medium or derived from its own cell wall murein, and thus plays a role in cell wall recycling. The protein is Anhydro-N-acetylmuramic acid kinase of Colwellia psychrerythraea (strain 34H / ATCC BAA-681) (Vibrio psychroerythus).